A 622-amino-acid chain; its full sequence is MAMAPSPSLVQVYTSPAAVAVWEWQDGLGTWHPYSATVCSFIEQQFVQQKGQRFGLGSLAHSIPLGQADPSLAPYIIDLPSWTQFRQDTGTMRAVRRHLFPQHSAPGRGVVWEWLSDDGSWTAYEASVCDYLEQQVARGNQLVDLAPLGYNYTVNYTTHTQTNKTSSFCRSVRRQAGPPYPVTTIIAPPGHTGVACSCHQCLSGSRTGPVSGRYRHSMTNLPAYPVPQHPPHRTASVFGTHQAFAPYNKPSLSGARSAPRLNTTNAWGAAPPSLGSQPLYRSSLSHLGPQHLPPGSSTSGAVSASLPSGPSSSPGSVPATVPMQMPKPSRVQQALAGMTSVLMSAIGLPVCLSRAPQPTSPPASRLASKSHGSVKRLRKMSVKGATPKPEPEPEQVIKNYTEELKVPPDEDCIICMEKLSTASGYSDVTDSKAIGSLAVGHLTKCSHAFHLLCLLAMYCNGNKDGSLQCPSCKTIYGEKTGTQPQGKMEVLRFQMSLPGHEDCGTILIVYSIPHGIQGPEHPNPGKPFTARGFPRQCYLPDNAQGRKVLELLKVAWKRRLIFTVGTSSTTGETDTVVWNEIHHKTEMDRNITGHGYPDPNYLQNVLAELAAQGVTEDCLEQQ.

WWE domains lie at 8 to 97 (SLVQ…AVRR) and 98 to 174 (HLFP…SVRR). An asymmetric dimethylarginine mark is found at arginine 213, arginine 215, and arginine 233. The residue at position 249 (lysine 249) is an N6-acetyllysine. Disordered stretches follow at residues 249-324 (KPSL…VPMQ) and 355-393 (APQP…EPEP). Residue arginine 256 is modified to Omega-N-methylarginine. Polar residues predominate over residues 274–285 (LGSQPLYRSSLS). Residues 299 to 322 (SGAVSASLPSGPSSSPGSVPATVP) show a composition bias toward low complexity. Serine 360 carries the post-translational modification Phosphoserine. Residues 372-381 (GSVKRLRKMS) show a composition bias toward basic residues. The RING-type zinc finger occupies 412-473 (CIICMEKLST…DGSLQCPSCK (62 aa)).

It belongs to the Deltex family. In terms of assembly, homodimer. May form a heterodimer with other members of the Deltex family. Interacts with NOTCH1.

The protein resides in the cytoplasm. It localises to the nucleus. It catalyses the reaction S-ubiquitinyl-[E2 ubiquitin-conjugating enzyme]-L-cysteine + [acceptor protein]-L-lysine = [E2 ubiquitin-conjugating enzyme]-L-cysteine + N(6)-ubiquitinyl-[acceptor protein]-L-lysine.. Its pathway is protein modification; protein ubiquitination. Regulator of Notch signaling, a signaling pathway involved in cell-cell communications that regulates a broad spectrum of cell-fate determinations. Probably acts both as a positive and negative regulator of Notch, depending on the developmental and cell context. Mediates the antineural activity of Notch, possibly by inhibiting the transcriptional activation mediated by MATCH1. Functions as a ubiquitin ligase protein in vitro, suggesting that it may regulate the Notch pathway via some ubiquitin ligase activity. The chain is Probable E3 ubiquitin-protein ligase DTX2 (DTX2) from Homo sapiens (Human).